We begin with the raw amino-acid sequence, 227 residues long: Protein MobD (227 aa).

The chain is Protein MobD (mobD) from Acidithiobacillus ferrooxidans (Thiobacillus ferrooxidans).